Reading from the N-terminus, the 184-residue chain is Adenine phosphoribosyltransferase (184 aa).

It belongs to the purine/pyrimidine phosphoribosyltransferase family. As to quaternary structure, homodimer.

It is found in the cytoplasm. The catalysed reaction is AMP + diphosphate = 5-phospho-alpha-D-ribose 1-diphosphate + adenine. It participates in purine metabolism; AMP biosynthesis via salvage pathway; AMP from adenine: step 1/1. Functionally, catalyzes a salvage reaction resulting in the formation of AMP, that is energically less costly than de novo synthesis. The polypeptide is Adenine phosphoribosyltransferase (Shewanella baltica (strain OS223)).